The chain runs to 229 residues: Clathrin light chain (229 aa).

Disordered regions lie at residues 1-24 (MSQF…DSKN) and 76-132 (EMQA…KLRE). Residues 107 to 132 (EPVRKWKEDQMKRIQERDESSKKLRE) show a composition bias toward basic and acidic residues. Ser229 is subject to Phosphoserine.

Belongs to the clathrin light chain family. In terms of assembly, clathrin coats are formed from molecules containing 3 heavy chains and 3 light chains.

It localises to the cytoplasmic vesicle membrane. The protein localises to the membrane. Its subcellular location is the coated pit. Clathrin is the major protein of the polyhedral coat of coated pits and vesicles. The sequence is that of Clathrin light chain (clc1) from Schizosaccharomyces pombe (strain 972 / ATCC 24843) (Fission yeast).